The chain runs to 398 residues: 4-hydroxy-3-methylbut-2-enyl diphosphate reductase (398 aa).

Cys66 contributes to the [4Fe-4S] cluster binding site. His96 provides a ligand contact to (2E)-4-hydroxy-3-methylbut-2-enyl diphosphate. His96 contributes to the dimethylallyl diphosphate binding site. Residue His96 coordinates isopentenyl diphosphate. Cys157 lines the [4Fe-4S] cluster pocket. (2E)-4-hydroxy-3-methylbut-2-enyl diphosphate is bound at residue His185. His185 contributes to the dimethylallyl diphosphate binding site. His185 is an isopentenyl diphosphate binding site. Glu187 serves as the catalytic Proton donor. Position 250 (Thr250) interacts with (2E)-4-hydroxy-3-methylbut-2-enyl diphosphate. Cys288 lines the [4Fe-4S] cluster pocket. Positions 317, 318, 319, and 379 each coordinate (2E)-4-hydroxy-3-methylbut-2-enyl diphosphate. Dimethylallyl diphosphate-binding residues include Ser317, Ser318, Asn319, and Ser379. Residues Ser317, Ser318, Asn319, and Ser379 each contribute to the isopentenyl diphosphate site.

The protein belongs to the IspH family. Requires [4Fe-4S] cluster as cofactor.

It carries out the reaction isopentenyl diphosphate + 2 oxidized [2Fe-2S]-[ferredoxin] + H2O = (2E)-4-hydroxy-3-methylbut-2-enyl diphosphate + 2 reduced [2Fe-2S]-[ferredoxin] + 2 H(+). It catalyses the reaction dimethylallyl diphosphate + 2 oxidized [2Fe-2S]-[ferredoxin] + H2O = (2E)-4-hydroxy-3-methylbut-2-enyl diphosphate + 2 reduced [2Fe-2S]-[ferredoxin] + 2 H(+). The protein operates within isoprenoid biosynthesis; dimethylallyl diphosphate biosynthesis; dimethylallyl diphosphate from (2E)-4-hydroxy-3-methylbutenyl diphosphate: step 1/1. It participates in isoprenoid biosynthesis; isopentenyl diphosphate biosynthesis via DXP pathway; isopentenyl diphosphate from 1-deoxy-D-xylulose 5-phosphate: step 6/6. Catalyzes the conversion of 1-hydroxy-2-methyl-2-(E)-butenyl 4-diphosphate (HMBPP) into a mixture of isopentenyl diphosphate (IPP) and dimethylallyl diphosphate (DMAPP). Acts in the terminal step of the DOXP/MEP pathway for isoprenoid precursor biosynthesis. The polypeptide is 4-hydroxy-3-methylbut-2-enyl diphosphate reductase (Synechococcus sp. (strain ATCC 27144 / PCC 6301 / SAUG 1402/1) (Anacystis nidulans)).